A 221-amino-acid chain; its full sequence is H-2 class II histocompatibility antigen, A-Q alpha chain (221 aa).

The segment at 1 to 76 is alpha-1; sequence GIVVYQSPGD…KRSNFTPATN (76 aa). The Extracellular portion of the chain corresponds to 1–183; it reads GIVVYQSPGD…IPAPMSELTE (183 aa). The interval 77-170 is alpha-2; it reads EAPQATVFPK…GLDEPVLKHW (94 aa). Residues 79 to 171 form the Ig-like C1-type domain; sequence PQATVFPKSP…LDEPVLKHWE (93 aa). A disulfide bridge links Cys99 with Cys155. Asn110 is a glycosylation site (N-linked (GlcNAc...) asparagine). Residues 171–183 are connecting peptide; sequence EPEIPAPMSELTE. Residues 184–209 traverse the membrane as a helical segment; sequence TVVCALGLSVGLVGIVVGTIFIIQGL. Residues 210-221 lie on the Cytoplasmic side of the membrane; it reads RSGGTSRPPGPL.

The protein belongs to the MHC class II family.

It localises to the membrane. The chain is H-2 class II histocompatibility antigen, A-Q alpha chain (H2-Aa) from Mus musculus (Mouse).